The chain runs to 730 residues: ATP-dependent DNA helicase Hel308 (730 aa).

ATP-binding positions include Gln28 and 46–53; that span reads IPTASGKT. The Helicase ATP-binding domain occupies 33–199; that stretch reads EKGLLEGKNL…WLDAELVLSE (167 aa). The DEAH box signature appears at 144–147; the sequence is DEVH. One can recognise a Helicase C-terminal domain in the interval 232-433; it reads AVNLVLDTIK…ALRTHILSTI (202 aa).

Belongs to the helicase family. Hel308 subfamily. Monomer.

The catalysed reaction is Couples ATP hydrolysis with the unwinding of duplex DNA by translocating in the 3'-5' direction.. It carries out the reaction ATP + H2O = ADP + phosphate + H(+). Functionally, DNA-dependent ATPase and 3'-5' DNA helicase that may be involved in repair of stalled replication forks. This is ATP-dependent DNA helicase Hel308 from Methanosarcina mazei (strain ATCC BAA-159 / DSM 3647 / Goe1 / Go1 / JCM 11833 / OCM 88) (Methanosarcina frisia).